Consider the following 340-residue polypeptide: DnaJ homolog subfamily B member 1 (340 aa).

A J domain is found at 2–70 (GKDYYQTLGL…REIFDRYGEE (69 aa)). Position 307 is a phosphothreonine (threonine 307).

As to quaternary structure, interacts with DNAJC3. Interacts with HSF1 (via transactivation domain); this interaction results in the inhibition of heat shock- and HSF1-induced transcriptional activity during the attenuation and recovery phase period of the heat shock response. Interacts with BAG3.

Its subcellular location is the cytoplasm. It localises to the nucleus. The protein localises to the nucleolus. Its function is as follows. Interacts with HSP70 and can stimulate its ATPase activity. Stimulates the association between HSC70 and HIP. Negatively regulates heat shock-induced HSF1 transcriptional activity during the attenuation and recovery phase period of the heat shock response. Stimulates ATP hydrolysis and the folding of unfolded proteins mediated by HSPA1A/B (in vitro). The polypeptide is DnaJ homolog subfamily B member 1 (Dnajb1) (Mus musculus (Mouse)).